We begin with the raw amino-acid sequence, 345 residues long: NADH-ubiquinone oxidoreductase chain 2 (345 aa).

The next 10 helical transmembrane spans lie at 1–21, 25–45, 59–79, 96–116, 123–143, 148–168, 191–211, 240–260, 274–294, and 324–344; these read MNPI…ILTM, HWVS…PIIS, YFLI…TNAY, IMLS…FWLP, PMIT…ALLI, LIPP…GGLG, ITIT…YILL, TASL…LSGF, HLTP…MFYL, and SLLS…PLMI.

The protein belongs to the complex I subunit 2 family.

It is found in the mitochondrion inner membrane. The enzyme catalyses a ubiquinone + NADH + 5 H(+)(in) = a ubiquinol + NAD(+) + 4 H(+)(out). Its function is as follows. Core subunit of the mitochondrial membrane respiratory chain NADH dehydrogenase (Complex I) that is believed to belong to the minimal assembly required for catalysis. Complex I functions in the transfer of electrons from NADH to the respiratory chain. The immediate electron acceptor for the enzyme is believed to be ubiquinone. The sequence is that of NADH-ubiquinone oxidoreductase chain 2 (MT-ND2) from Varanus timorensis (Timor monitor).